The sequence spans 349 residues: UDP-N-acetylenolpyruvoylglucosamine reductase (349 aa).

An FAD-binding PCMH-type domain is found at 24–197; sequence FGIDATARFA…VAVTFRLPKR (174 aa). Arg173 is a catalytic residue. Ser249 functions as the Proton donor in the catalytic mechanism. Glu345 is a catalytic residue.

This sequence belongs to the MurB family. FAD is required as a cofactor.

It localises to the cytoplasm. The enzyme catalyses UDP-N-acetyl-alpha-D-muramate + NADP(+) = UDP-N-acetyl-3-O-(1-carboxyvinyl)-alpha-D-glucosamine + NADPH + H(+). It participates in cell wall biogenesis; peptidoglycan biosynthesis. In terms of biological role, cell wall formation. This Burkholderia ambifaria (strain ATCC BAA-244 / DSM 16087 / CCUG 44356 / LMG 19182 / AMMD) (Burkholderia cepacia (strain AMMD)) protein is UDP-N-acetylenolpyruvoylglucosamine reductase.